Consider the following 204-residue polypeptide: Tat proofreading chaperone DmsD (204 aa).

The protein belongs to the TorD/DmsD family. DmsD subfamily.

Functionally, required for biogenesis/assembly of DMSO reductase, but not for the interaction of the DmsA signal peptide with the Tat system. May be part of a chaperone cascade complex that facilitates a folding-maturation pathway for the substrate protein. The polypeptide is Tat proofreading chaperone DmsD (Escherichia coli O6:H1 (strain CFT073 / ATCC 700928 / UPEC)).